Reading from the N-terminus, the 229-residue chain is Large ribosomal subunit protein uL1 (229 aa).

This sequence belongs to the universal ribosomal protein uL1 family. In terms of assembly, part of the 50S ribosomal subunit.

Binds directly to 23S rRNA. The L1 stalk is quite mobile in the ribosome, and is involved in E site tRNA release. Its function is as follows. Protein L1 is also a translational repressor protein, it controls the translation of the L11 operon by binding to its mRNA. The polypeptide is Large ribosomal subunit protein uL1 (Clostridium kluyveri (strain ATCC 8527 / DSM 555 / NBRC 12016 / NCIMB 10680 / K1)).